A 64-amino-acid polypeptide reads, in one-letter code: MRPRSRAGDKFMSQGQELCHEYFQLTAPCEKQPCIDMCSSKYKTGKGVCGPAVHQCFCTFSCTV.

4 cysteine pairs are disulfide-bonded: cysteine 19-cysteine 62, cysteine 29-cysteine 49, cysteine 34-cysteine 56, and cysteine 38-cysteine 58.

It belongs to the DEFL family.

This chain is Defensin-like protein 123, found in Arabidopsis thaliana (Mouse-ear cress).